Reading from the N-terminus, the 241-residue chain is Phosphoribosylaminoimidazole-succinocarboxamide synthase (241 aa).

Belongs to the SAICAR synthetase family.

It catalyses the reaction 5-amino-1-(5-phospho-D-ribosyl)imidazole-4-carboxylate + L-aspartate + ATP = (2S)-2-[5-amino-1-(5-phospho-beta-D-ribosyl)imidazole-4-carboxamido]succinate + ADP + phosphate + 2 H(+). It functions in the pathway purine metabolism; IMP biosynthesis via de novo pathway; 5-amino-1-(5-phospho-D-ribosyl)imidazole-4-carboxamide from 5-amino-1-(5-phospho-D-ribosyl)imidazole-4-carboxylate: step 1/2. The chain is Phosphoribosylaminoimidazole-succinocarboxamide synthase from Caldivirga maquilingensis (strain ATCC 700844 / DSM 13496 / JCM 10307 / IC-167).